Consider the following 189-residue polypeptide: Methylated-DNA--protein-cysteine methyltransferase (189 aa).

Residues Y128 and R142 each coordinate DNA. The active-site Nucleophile; methyl group acceptor is the C159. S165 is a binding site for DNA.

Belongs to the MGMT family.

The protein localises to the nucleus. It catalyses the reaction a 6-O-methyl-2'-deoxyguanosine in DNA + L-cysteinyl-[protein] = S-methyl-L-cysteinyl-[protein] + a 2'-deoxyguanosine in DNA. The catalysed reaction is a 4-O-methyl-thymidine in DNA + L-cysteinyl-[protein] = a thymidine in DNA + S-methyl-L-cysteinyl-[protein]. Its function is as follows. Involved in the cellular defense against the biological effects of O6-methylguanine (O6-MeG) and O4-methylthymine (O4-MeT) in DNA. Repairs the methylated nucleobase in DNA by stoichiometrically transferring the methyl group to a cysteine residue in the enzyme. This is a suicide reaction: the enzyme is irreversibly inactivated. The polypeptide is Methylated-DNA--protein-cysteine methyltransferase (MGT1) (Kluyveromyces lactis (strain ATCC 8585 / CBS 2359 / DSM 70799 / NBRC 1267 / NRRL Y-1140 / WM37) (Yeast)).